Reading from the N-terminus, the 346-residue chain is uncharacterized protein (346 aa).

A Zn(2+)-binding site is contributed by histidine 65. The active site involves aspartate 67. Aspartate 89 is a binding site for Zn(2+). Glutamate 115 functions as the Proton acceptor in the catalytic mechanism. The Zn(2+) site is built by glutamate 116, glutamate 145, and histidine 319.

It belongs to the peptidase M20A family. Requires Zn(2+) as cofactor. The cofactor is Co(2+).

This is an uncharacterized protein from Methanocaldococcus jannaschii (strain ATCC 43067 / DSM 2661 / JAL-1 / JCM 10045 / NBRC 100440) (Methanococcus jannaschii).